We begin with the raw amino-acid sequence, 809 residues long: Sucrose synthase 4 (809 aa).

The segment at 275-753 (MIFNVVVVSP…GLQRIYEKYT (479 aa)) is GT-B glycosyltransferase.

It belongs to the glycosyltransferase 1 family. Plant sucrose synthase subfamily. Predominantly expressed in the leaf tissues and in caryopses.

It carries out the reaction an NDP-alpha-D-glucose + D-fructose = a ribonucleoside 5'-diphosphate + sucrose + H(+). Functionally, sucrose-cleaving enzyme that provides UDP-glucose and fructose for various metabolic pathways. In Oryza sativa subsp. japonica (Rice), this protein is Sucrose synthase 4 (SUS4).